We begin with the raw amino-acid sequence, 241 residues long: UDP-2,3-diacylglucosamine hydrolase (241 aa).

The Mn(2+) site is built by Asp-8, His-10, Asp-41, Asn-79, and His-114. Substrate is bound at residue 79–80 (NR). Asp-122, Ser-160, Lys-167, and His-195 together coordinate substrate. Residues His-195 and His-197 each contribute to the Mn(2+) site.

The protein belongs to the LpxH family. Mn(2+) is required as a cofactor.

It localises to the cell inner membrane. It carries out the reaction UDP-2-N,3-O-bis[(3R)-3-hydroxytetradecanoyl]-alpha-D-glucosamine + H2O = 2-N,3-O-bis[(3R)-3-hydroxytetradecanoyl]-alpha-D-glucosaminyl 1-phosphate + UMP + 2 H(+). It functions in the pathway glycolipid biosynthesis; lipid IV(A) biosynthesis; lipid IV(A) from (3R)-3-hydroxytetradecanoyl-[acyl-carrier-protein] and UDP-N-acetyl-alpha-D-glucosamine: step 4/6. In terms of biological role, hydrolyzes the pyrophosphate bond of UDP-2,3-diacylglucosamine to yield 2,3-diacylglucosamine 1-phosphate (lipid X) and UMP by catalyzing the attack of water at the alpha-P atom. Involved in the biosynthesis of lipid A, a phosphorylated glycolipid that anchors the lipopolysaccharide to the outer membrane of the cell. In Azotobacter vinelandii (strain DJ / ATCC BAA-1303), this protein is UDP-2,3-diacylglucosamine hydrolase.